A 565-amino-acid polypeptide reads, in one-letter code: MKQQKPKISFIAAMLIVIGSSIGAGIFFKSSTVLENSQASLVLAIFNWLVASVAVIAMALALIEIASVRNDNLSIISWVKVFNRRWLYHGCKNFMTYLYLPLTFFFMPLYFICSIQDGFRGLLGLETGAHFNTSVDWLIWLALALIITTYFLTIPPLYAKVGNIQNMVVSAVKFIPLVFVPIIGFIVAGTGNGELKNVKALVQPPQINGATASFTQLVQAGYGITRFTGIGAGMGSFISIAAIFFAYDGFYVTAGLQSEMREPKKTPWALFLGLLITTLFYLILAVALSINGGLFSGMEESMGKLFNNKRAGQIVFGVVNLMIGIGVLGIINGFALWAPRFVEDLLAQGDLPFWKQVQGRLNPNKPVVGVIYCLVLSLTVQVLFTVIGALAYLPTVADYKNYVNTEIDKLNSMQWLYSFSDLMATWTSLFTFAFIACAIFGAIVNRKTKKITIANPKRYFLPAAWIAVVVNCISVFVTIIEPFINLFLLFGYDETVAHTVLGNDFIELNELVIGRVMLIVVLVFFAIISFLPVYVEDQYHKRKFGSLANYQQYVQQHLAHSTING.

Transmembrane regions (helical) follow at residues 8–28, 43–63, 95–115, 137–157, 167–187, 227–247, 268–288, 314–334, 367–387, 424–444, 460–480, 482–502, and 516–536; these read ISFI…GIFF, LAIF…LALI, MTYL…ICSI, WLIW…IPPL, MVVS…GFIV, FTGI…FFAY, WALF…AVAL, IVFG…INGF, VVGV…FTVI, ATWT…GAIV, FLPA…VTII, PFIN…TVLG, and VMLI…VYVE.

To M.pneumoniae MPN_095 and MPN_096.

Its subcellular location is the cell membrane. This is an uncharacterized protein from Mycoplasma pneumoniae (strain ATCC 29342 / M129 / Subtype 1) (Mycoplasmoides pneumoniae).